A 936-amino-acid polypeptide reads, in one-letter code: Probable outer membrane protein pmp7 (936 aa).

Residues 1–23 (MKSSVSWLFFSSIPLFSSLSIVA) form the signal peptide. Residues 636–936 (GEPFERELWL…NTNLGSKFCF (301 aa)) enclose the Autotransporter domain.

Belongs to the PMP outer membrane protein family.

It localises to the secreted. The protein resides in the cell wall. It is found in the cell outer membrane. The polypeptide is Probable outer membrane protein pmp7 (pmp7) (Chlamydia pneumoniae (Chlamydophila pneumoniae)).